A 106-amino-acid polypeptide reads, in one-letter code: U1-lycotoxin-Ls1b (106 aa).

An N-terminal signal peptide occupies residues 1-19 (MKVLVVVALLVTLISYSSS). Positions 20–40 (EGIDDPEADELLSLMANEQTR) are excised as a propeptide. 4 disulfides stabilise this stretch: cysteine 43-cysteine 58, cysteine 50-cysteine 67, cysteine 57-cysteine 85, and cysteine 69-cysteine 83.

It belongs to the neurotoxin 19 (CSTX) family. 04 (U1-Lctx) subfamily. Expressed by the venom gland.

It is found in the secreted. This is U1-lycotoxin-Ls1b from Lycosa singoriensis (Wolf spider).